The following is a 330-amino-acid chain: Transcription factor zip1 (330 aa).

A compositionally biased stretch (basic and acidic residues) spans 133-148 (SKETQEKTSSQRELFE). 2 disordered regions span residues 133–165 (SKET…SSSS) and 238–277 (PSLS…NTAA). Residues 150 to 165 (KSSVASASKDNVSSSS) are compositionally biased toward low complexity. Polar residues predominate over residues 244–262 (KGAQSPNANSKRTKATSAI). Residues 264–327 (TAAEEDKRRR…NWLKGLIRPT (64 aa)) form the bZIP domain. Positions 270 to 288 (KRRRNTAASARFRIKKKLK) are basic motif. Positions 292-320 (LERTAKELTEKVAILETRVRELEMENNWL) are leucine-zipper.

Belongs to the bZIP family. In terms of assembly, interacts with pof1.

Its subcellular location is the nucleus. Functionally, mediates cell growth arrest in response to cadmium exposure, which is essential to maintain cell viability. Regulates cadmium stress specific genes. The chain is Transcription factor zip1 (zip1) from Schizosaccharomyces pombe (strain 972 / ATCC 24843) (Fission yeast).